The sequence spans 157 residues: Protein-export protein SecB (157 aa).

Belongs to the SecB family. Homotetramer, a dimer of dimers. One homotetramer interacts with 1 SecA dimer.

It is found in the cytoplasm. One of the proteins required for the normal export of preproteins out of the cell cytoplasm. It is a molecular chaperone that binds to a subset of precursor proteins, maintaining them in a translocation-competent state. It also specifically binds to its receptor SecA. The sequence is that of Protein-export protein SecB from Magnetococcus marinus (strain ATCC BAA-1437 / JCM 17883 / MC-1).